Here is a 469-residue protein sequence, read N- to C-terminus: Protein RUFY3 (469 aa).

Residues Thr5 and Thr12 each carry the phosphothreonine modification. 2 positions are modified to phosphoserine: Ser34 and Ser49. Thr51 carries the post-translational modification Phosphothreonine. The region spanning 95–227 (DSDYAPLQQF…IDANFCMKGE (133 aa)) is the RUN domain. Coiled-coil stretches lie at residues 271–362 (NRHL…VEKE) and 422–463 (KSEL…AANK).

In terms of assembly, interacts with PAK1. Interacts (via C-terminus) with Ras-related Rab-5 proteins. Interacts (via C-terminus) with Ras-related Rap-2 proteins. Interacts with PIK3CA and PIK3R1. Interacts (via N-terminus) with FSCN1; this interaction induces neuron axon development. Interacts with DBN1. Interacts (via the second coiled coil) with GTP-, but not GDP-bound ARL8A and ARL8B. Interacts with dynactin/DCTN1 and the dynein intermediate chain DYNC1I1/2. Directly interacts with DYNC1LI1. In terms of processing, isoform 1 is partially phosphorylated. Phosphorylated by PAK1. In terms of tissue distribution, expressed in brain (at protein level).

It localises to the cytoplasm. The protein localises to the endomembrane system. The protein resides in the cell projection. Its subcellular location is the invadopodium. It is found in the growth cone. It localises to the perikaryon. The protein localises to the filopodium. The protein resides in the lamellipodium. Its subcellular location is the lysosome. Its function is as follows. ARL8 effector that promotes the coupling of endolysosomes to dynein-dynactin for retrograde transport along microtubules. Acts by binding both GTP-bound ARL8 and dynein-dynactin. In nonneuronal cells, promotes concentration of endolysosomes in the juxtanuclear area. In hippocampal neurons, drives retrograde transport of endolysosomes from the axon to the soma. Plays a role in the generation of neuronal polarity formation and axon growth. Implicated in the formation of a single axon by developing neurons. May inhibit the formation of additional axons by inhibition of PI3K in minor neuronal processes. Plays a role in the formation of F-actin-enriched protrusive structures at the cell periphery. Plays a role in cytoskeletal organization by regulating the subcellular localization of FSCN1 and DBN1 at axonal growth cones. The polypeptide is Protein RUFY3 (Rattus norvegicus (Rat)).